We begin with the raw amino-acid sequence, 320 residues long: MRLVFAGTPEFARVALDALLAAGHDIPLVLTQPDRPAGRGLKLTPSPVKQAALAAGIEVAQPRSLRLDGRYPDDAAQAQAQLRQAAPEVMVVAAYGLILPAWTLALPPRGCLNIHASLLPRWRGAAPIQRAIEAGDTQTGVTIMQMDEGLDTGDMLLEHRVPIGAADTAAQLHDALAAAGGQAIVQALAALQAGNLPARPQPADGVTYAAKLDKAQAALDCAQPAALLARRVRAFNPVPGATLRLPGLDEPVKVWRAQALDASAAQAPGSVLRAGPEGIDIATGSGVLRLLELQKAGGKRQPVDVFVRGWQPPAHPLKSE.

A (6S)-5,6,7,8-tetrahydrofolate-binding site is contributed by 117–120 (SLLP).

This sequence belongs to the Fmt family.

The catalysed reaction is L-methionyl-tRNA(fMet) + (6R)-10-formyltetrahydrofolate = N-formyl-L-methionyl-tRNA(fMet) + (6S)-5,6,7,8-tetrahydrofolate + H(+). Functionally, attaches a formyl group to the free amino group of methionyl-tRNA(fMet). The formyl group appears to play a dual role in the initiator identity of N-formylmethionyl-tRNA by promoting its recognition by IF2 and preventing the misappropriation of this tRNA by the elongation apparatus. This is Methionyl-tRNA formyltransferase from Bordetella petrii (strain ATCC BAA-461 / DSM 12804 / CCUG 43448).